The sequence spans 241 residues: Uridylate kinase (241 aa).

15–18 (KLSG) lines the ATP pocket. Residues 23–28 (GTEGFG) are involved in allosteric activation by GTP. Gly57 contributes to the UMP binding site. ATP-binding residues include Gly58 and Arg62. UMP-binding positions include Asp77 and 138 to 145 (TGNPFFTT). ATP is bound by residues Thr165, Tyr171, and Asp174.

It belongs to the UMP kinase family. As to quaternary structure, homohexamer.

The protein localises to the cytoplasm. It carries out the reaction UMP + ATP = UDP + ADP. The protein operates within pyrimidine metabolism; CTP biosynthesis via de novo pathway; UDP from UMP (UMPK route): step 1/1. Allosterically activated by GTP. Inhibited by UTP. Functionally, catalyzes the reversible phosphorylation of UMP to UDP. The sequence is that of Uridylate kinase from Pectobacterium atrosepticum (strain SCRI 1043 / ATCC BAA-672) (Erwinia carotovora subsp. atroseptica).